We begin with the raw amino-acid sequence, 434 residues long: MVIKKVHSRQIFDSRGNPTVEVDLWTDKGMFRAAVPSGASTGIYEALEMRDKDAKNYHGKTLFNAVGNVNKIIAPALVDKKMDEKDQTAVDNFLLALDGTENKNKLGANAILGVSLAVCKAGAAAKGVPLYRHIADLAGNKEVILPVPAFNVINGGSHAGNKLAMQEFMILPTGAKNFTEAMKMGTEVYHHLKSVIKKKYGQDACNVGDEGGFAPNILDNKEGLELLKTAIANAGYTAEIEIGMDVAASEFCKEKKYDLDFKNPDSNPNDWLTSDQLADVYKDFVKNYPVVSIEDPFDQDDWEAYTKMTKDMDIQIVGDDLLVTNPKRVQKGIDLKAANALLLKVNQIGSVTESIQACKMSQDAGWGVMVSHRSGETEDTFIADLVVGLCTGQIKTGAPCRSERLAKYNQILRIEEELGDKAVFAGKKFRNPLK.

Substrate contacts are provided by histidine 158 and glutamate 167. The Proton donor role is filled by glutamate 210. The Mg(2+) site is built by aspartate 245, glutamate 294, and aspartate 319. The substrate site is built by glutamate 294 and aspartate 319. The Proton acceptor role is filled by lysine 344. Residues 371–374 and lysine 395 contribute to the substrate site; that span reads SHRS.

This sequence belongs to the enolase family. In terms of assembly, homodimer. The cofactor is Mg(2+).

Its subcellular location is the cytoplasm. It carries out the reaction (2R)-2-phosphoglycerate = phosphoenolpyruvate + H2O. Its pathway is carbohydrate degradation; glycolysis; pyruvate from D-glyceraldehyde 3-phosphate: step 4/5. This Doryteuthis pealeii (Longfin inshore squid) protein is Enolase.